The primary structure comprises 171 residues: S-ribosylhomocysteine lyase (171 aa).

Residues His-54, His-58, and Cys-128 each coordinate Fe cation.

This sequence belongs to the LuxS family. Homodimer. Fe cation is required as a cofactor.

It carries out the reaction S-(5-deoxy-D-ribos-5-yl)-L-homocysteine = (S)-4,5-dihydroxypentane-2,3-dione + L-homocysteine. In terms of biological role, involved in the synthesis of autoinducer 2 (AI-2) which is secreted by bacteria and is used to communicate both the cell density and the metabolic potential of the environment. The regulation of gene expression in response to changes in cell density is called quorum sensing. Catalyzes the transformation of S-ribosylhomocysteine (RHC) to homocysteine (HC) and 4,5-dihydroxy-2,3-pentadione (DPD). The sequence is that of S-ribosylhomocysteine lyase from Klebsiella pneumoniae (strain 342).